The sequence spans 293 residues: Acetylglutamate kinase (293 aa).

Substrate-binding positions include 67 to 68 (GG), R89, and N190.

It belongs to the acetylglutamate kinase family. ArgB subfamily.

Its subcellular location is the cytoplasm. The catalysed reaction is N-acetyl-L-glutamate + ATP = N-acetyl-L-glutamyl 5-phosphate + ADP. It functions in the pathway amino-acid biosynthesis; L-arginine biosynthesis; N(2)-acetyl-L-ornithine from L-glutamate: step 2/4. Its function is as follows. Catalyzes the ATP-dependent phosphorylation of N-acetyl-L-glutamate. In Nitrosospira multiformis (strain ATCC 25196 / NCIMB 11849 / C 71), this protein is Acetylglutamate kinase.